The sequence spans 340 residues: Ketol-acid reductoisomerase (NADP(+)) (340 aa).

A KARI N-terminal Rossmann domain is found at 3–182 (VQMEYEKDVK…GAARVGLLET (180 aa)). Residues 26–29 (YGSQ), R49, S53, and 83–86 (DEIQ) each bind NADP(+). H108 is an active-site residue. G134 serves as a coordination point for NADP(+). In terms of domain architecture, KARI C-terminal knotted spans 183 to 328 (TYKEETEEDL…AELRKAMPFV (146 aa)). Mg(2+) is bound by residues D191, E195, E227, and E231. S252 is a substrate binding site.

The protein belongs to the ketol-acid reductoisomerase family. The cofactor is Mg(2+).

It catalyses the reaction (2R)-2,3-dihydroxy-3-methylbutanoate + NADP(+) = (2S)-2-acetolactate + NADPH + H(+). The enzyme catalyses (2R,3R)-2,3-dihydroxy-3-methylpentanoate + NADP(+) = (S)-2-ethyl-2-hydroxy-3-oxobutanoate + NADPH + H(+). It participates in amino-acid biosynthesis; L-isoleucine biosynthesis; L-isoleucine from 2-oxobutanoate: step 2/4. The protein operates within amino-acid biosynthesis; L-valine biosynthesis; L-valine from pyruvate: step 2/4. Involved in the biosynthesis of branched-chain amino acids (BCAA). Catalyzes an alkyl-migration followed by a ketol-acid reduction of (S)-2-acetolactate (S2AL) to yield (R)-2,3-dihydroxy-isovalerate. In the isomerase reaction, S2AL is rearranged via a Mg-dependent methyl migration to produce 3-hydroxy-3-methyl-2-ketobutyrate (HMKB). In the reductase reaction, this 2-ketoacid undergoes a metal-dependent reduction by NADPH to yield (R)-2,3-dihydroxy-isovalerate. This Streptococcus thermophilus (strain ATCC BAA-491 / LMD-9) protein is Ketol-acid reductoisomerase (NADP(+)).